The following is a 389-amino-acid chain: MGQNLSTSNPLGFFPDHQLDPAFRANTRNPDWDFNPNKDTWPDANKVGAGAFGLGFTPPHGGLLGWSPQAQGILQTLPANPPPAATNRQSGRQPTPLSPPLRDAHPQAMQWTSTTFHQALQDPRVRGLYFPAGGSSSGTVNPVPTTASPILSIFSKIGDLAPNMENITSGFLGPLLVLQAGFFLLTRILTIPQSLDSWWTSLNFLGGTTVCLGQNSQSPTSNHSPTSCPPTCPGYRWMCLRRFIIFLFILLLCLIFLLVLLDYQGMLPVCPLIPGSSTTSTGPCRTCMTTAQGTSMYPSCCCTKPSDGNCTCIPIPSSWAFGKFLWEWASARFSWLSLLVPFVQWFAGLSPIVWLSVIWMMWYWGPSLYSILSPFLPLLPIFFCLWAYI.

M1 bears the N-acetylmethionine mark. G2 carries N-myristoyl glycine; by host lipidation. The tract at residues 2 to 108 is pre-S1; sequence GQNLSTSNPL…PPLRDAHPQA (107 aa). Positions 2–163 are pre-S; it reads GQNLSTSNPL…FSKIGDLAPN (162 aa). Topologically, residues 2 to 170 are virion surface; in external conformation; it reads GQNLSTSNPL…APNMENITSG (169 aa). At 2-242 the chain is on the intravirion; in internal conformation side; that stretch reads GQNLSTSNPL…PGYRWMCLRR (241 aa). The interval 76–103 is disordered; sequence TLPANPPPAATNRQSGRQPTPLSPPLRD. Positions 86–95 are enriched in polar residues; sequence TNRQSGRQPT. The pre-S2 stretch occupies residues 109 to 163; sequence MQWTSTTFHQALQDPRVRGLYFPAGGSSSGTVNPVPTTASPILSIFSKIGDLAPN. A helical membrane pass occupies residues 171–191; it reads FLGPLLVLQAGFFLLTRILTI. The Intravirion; in external conformation segment spans residues 192 to 242; sequence PQSLDSWWTSLNFLGGTTVCLGQNSQSPTSNHSPTSCPPTCPGYRWMCLRR. Residues 243 to 263 traverse the membrane as a helical segment; sequence FIIFLFILLLCLIFLLVLLDY. The Virion surface segment spans residues 264–337; sequence QGMLPVCPLI…WASARFSWLS (74 aa). An N-linked (GlcNAc...) asparagine; by host glycan is attached at N309. Residues 338 to 358 form a helical membrane-spanning segment; that stretch reads LLVPFVQWFAGLSPIVWLSVI. Residues 359–364 are Intravirion-facing; the sequence is WMMWYW. A helical transmembrane segment spans residues 365-387; sequence GPSLYSILSPFLPLLPIFFCLWA. The Virion surface segment spans residues 388-389; sequence YI.

The protein belongs to the orthohepadnavirus major surface antigen family. In terms of assembly, in its internal form (Li-HBsAg), interacts with the capsid protein and with the isoform S. Interacts with host chaperone CANX. As to quaternary structure, associates with host chaperone CANX through its pre-S2 N glycan; this association may be essential for isoform M proper secretion. Interacts with isoform L. Interacts with the antigens of satellite virus HDV (HDVAgs); this interaction is required for encapsidation of HDV genomic RNA. Post-translationally, isoform M is N-terminally acetylated by host at a ratio of 90%, and N-glycosylated by host at the pre-S2 region. Myristoylated.

The protein resides in the virion membrane. In terms of biological role, the large envelope protein exists in two topological conformations, one which is termed 'external' or Le-HBsAg and the other 'internal' or Li-HBsAg. In its external conformation the protein attaches the virus to cell receptors and thereby initiating infection. This interaction determines the species specificity and liver tropism. This attachment induces virion internalization predominantly through caveolin-mediated endocytosis. The large envelope protein also assures fusion between virion membrane and endosomal membrane. In its internal conformation the protein plays a role in virion morphogenesis and mediates the contact with the nucleocapsid like a matrix protein. The middle envelope protein plays an important role in the budding of the virion. It is involved in the induction of budding in a nucleocapsid independent way. In this process the majority of envelope proteins bud to form subviral lipoprotein particles of 22 nm of diameter that do not contain a nucleocapsid. This Homo sapiens (Human) protein is Large envelope protein.